The primary structure comprises 255 residues: Putative cysteine-rich repeat secretory protein 27 (255 aa).

An N-terminal signal peptide occupies residues 1–26 (MISKFGSVHILAVVAIQLLIIPSVSS). Gnk2-homologous domains follow at residues 33-135 (YLHH…TINS) and 141-252 (YEND…LYPF).

It belongs to the cysteine-rich repeat secretory protein family.

It is found in the secreted. This chain is Putative cysteine-rich repeat secretory protein 27 (CRRSP27), found in Arabidopsis thaliana (Mouse-ear cress).